Consider the following 338-residue polypeptide: tRNA N6-adenosine threonylcarbamoyltransferase (338 aa).

The Fe cation site is built by His-111 and His-115. Substrate contacts are provided by residues 134–138 (LVSGG), Asp-167, Gly-180, and Asn-272. Asp-300 serves as a coordination point for Fe cation.

Belongs to the KAE1 / TsaD family. The cofactor is Fe(2+).

The protein resides in the cytoplasm. It carries out the reaction L-threonylcarbamoyladenylate + adenosine(37) in tRNA = N(6)-L-threonylcarbamoyladenosine(37) in tRNA + AMP + H(+). Its function is as follows. Required for the formation of a threonylcarbamoyl group on adenosine at position 37 (t(6)A37) in tRNAs that read codons beginning with adenine. Is involved in the transfer of the threonylcarbamoyl moiety of threonylcarbamoyl-AMP (TC-AMP) to the N6 group of A37, together with TsaE and TsaB. TsaD likely plays a direct catalytic role in this reaction. In Shewanella baltica (strain OS223), this protein is tRNA N6-adenosine threonylcarbamoyltransferase.